Reading from the N-terminus, the 462-residue chain is Elongation factor 1-alpha 1 (462 aa).

The residue at position 2 (Gly2) is a N,N,N-trimethylglycine. In terms of domain architecture, tr-type G spans 5–242 (KTHINIVVIG…DCILPPTRPT (238 aa)). Positions 14-21 (GHVDSGKS) are G1. 14–21 (GHVDSGKS) serves as a coordination point for GTP. Lys36 is modified (N6,N6,N6-trimethyllysine; alternate). Lys36 is subject to N6,N6-dimethyllysine; alternate. An N6-methyllysine; alternate modification is found at Lys36. N6,N6-dimethyllysine is present on Lys55. Residues 70 to 74 (GITID) are G2. N6,N6,N6-trimethyllysine; by EEF1AKMT1 is present on Lys79. The interval 91–94 (DAPG) is G3. 153–156 (NKMD) serves as a coordination point for GTP. Residues 153-156 (NKMD) form a G4 region. Lys165 is subject to N6,N6,N6-trimethyllysine; alternate; by EEF1AKMT3. An N6,N6-dimethyllysine; alternate; by EEF1AKMT3 modification is found at Lys165. At Lys165 the chain carries N6-acetyllysine; alternate. Lys165 carries the post-translational modification N6-methyllysine; alternate; by EEF1AKMT3. Lys172 is subject to N6-acetyllysine. 194–196 (SGW) is a binding site for GTP. Positions 194 to 196 (SGW) are G5. Position 273 is an N6-acetyllysine (Lys273). Phosphoserine; by TGFBR1 is present on Ser300. At Glu301 the chain carries 5-glutamyl glycerylphosphorylethanolamine. Lys318 carries the N6,N6,N6-trimethyllysine; by EEF1AKMT2 modification. Glu374 bears the 5-glutamyl glycerylphosphorylethanolamine mark. Residue Lys385 forms a Glycyl lysine isopeptide (Lys-Gly) (interchain with G-Cter in ubiquitin) linkage. The residue at position 392 (Lys392) is an N6-acetyllysine; alternate. An N6-succinyllysine; alternate modification is found at Lys392. Thr432 is modified (phosphothreonine; by PASK). Lys439 carries the post-translational modification N6-acetyllysine.

Belongs to the TRAFAC class translation factor GTPase superfamily. Classic translation factor GTPase family. EF-Tu/EF-1A subfamily. Found in a nuclear export complex with XPO5, EEF1A1, Ran and aminoacylated tRNA. Interacts with PARP1 and TXK. Interacts with KARS1. May interact with ERGIC2. Interacts with IFIT1 (via TPR repeats 4-7). Interacts with DLC1, facilitating distribution to the membrane periphery and ruffles upon growth factor stimulation. Interacts with ZPR1; the interaction occurs in a epidermal growth factor (EGF)-dependent manner. Interacts with PPP1R16B. Interacts with SPHK1 and SPHK2; both interactions increase SPHK1 and SPHK2 kinase activity. Interacts with guanyl-nucleotide exchange factor EEF1B2. Interacts (via middle-region) with HTATIP2 (via N-terminus); the interaction is direct and competes with EEF1A1 binding to guanyl-nucleotide exchange factor EEF1B2, thereby inhibiting GDP for GTP exchange and reactivation of EEF1A1. Interacts with tRNA. Post-translationally, ISGylated. Phosphorylated by TXK. Phosphorylation by PASK increases translation efficiency. Phosphorylated by ROCK2. Phosphorylation by TGFBR1 inhibits translation elongation. In terms of processing, trimethylated at Lys-79 by EEF1AKMT1. Methylated at Lys-165 by EEF1AKMT3, methylation by EEF1AKMT3 is dynamic as well as inducible by stress conditions, such as ER-stress, and plays a regulatory role on mRNA translation. Trimethylated at Lys-318 by EEF1AKMT2. Mono-, di-, and trimethylated at Lys-36 by EEF1AKMT4; trimethylated form is predominant. Methylation by EEF1AKMT4 contributes to the fine-tuning of translation rates for a subset of tRNAs. Trimethylated at Gly-2 by METTL13. Mono- and dimethylated at Lys-55 by METTL13; dimethylated form is predominant. Post-translationally, ubiquitinated at Lys-385 by RNF14 in response to ribosome collisions (ribosome stalling), leading to its degradation by the proteasome and rescue of stalled ribosomes.

Its subcellular location is the cytoplasm. It is found in the nucleus. It localises to the nucleolus. The protein localises to the cell membrane. It catalyses the reaction GTP + H2O = GDP + phosphate + H(+). Functionally, translation elongation factor that catalyzes the GTP-dependent binding of aminoacyl-tRNA (aa-tRNA) to the A-site of ribosomes during the elongation phase of protein synthesis. Base pairing between the mRNA codon and the aa-tRNA anticodon promotes GTP hydrolysis, releasing the aa-tRNA from EEF1A1 and allowing its accommodation into the ribosome. The growing protein chain is subsequently transferred from the P-site peptidyl tRNA to the A-site aa-tRNA, extending it by one amino acid through ribosome-catalyzed peptide bond formation. Also plays a role in the positive regulation of IFNG transcription in T-helper 1 cells as part of an IFNG promoter-binding complex with TXK and PARP1. Also plays a role in cytoskeleton organization by promoting actin bundling. The protein is Elongation factor 1-alpha 1 (EEF1A1) of Bos taurus (Bovine).